We begin with the raw amino-acid sequence, 104 residues long: Large ribosomal subunit protein bL21 (104 aa).

The protein belongs to the bacterial ribosomal protein bL21 family. In terms of assembly, part of the 50S ribosomal subunit. Contacts protein L20.

In terms of biological role, this protein binds to 23S rRNA in the presence of protein L20. In Agrobacterium fabrum (strain C58 / ATCC 33970) (Agrobacterium tumefaciens (strain C58)), this protein is Large ribosomal subunit protein bL21.